The primary structure comprises 185 residues: Transcription termination/antitermination protein NusG (185 aa).

A KOW domain is found at P133–L161.

This sequence belongs to the NusG family.

Participates in transcription elongation, termination and antitermination. In Haemophilus influenzae (strain ATCC 51907 / DSM 11121 / KW20 / Rd), this protein is Transcription termination/antitermination protein NusG.